A 343-amino-acid chain; its full sequence is Coiled-coil domain-containing protein 97 (343 aa).

M1 carries the post-translational modification N-acetylmethionine. Residues M1–P37 form a disordered region. T47 is modified (phosphothreonine). Disordered stretches follow at residues A200 to L220, Q234 to E277, and R292 to D343. The stretch at L224–Q262 forms a coiled coil. Acidic residues predominate over residues Q241–D261. Basic and acidic residues predominate over residues Q262–E277. A phosphoserine mark is found at S275 and S337. The segment covering E324–D343 has biased composition (acidic residues).

In terms of assembly, associates with splicing factor SF3B complex, involved in branch-site recognition.

It localises to the nucleus. Functionally, may play a role pre-mRNA splicing through the association with the splicing factor SF3B complex which is involved in branch-site recognition. The polypeptide is Coiled-coil domain-containing protein 97 (CCDC97) (Homo sapiens (Human)).